The following is a 422-amino-acid chain: Platelet-activating factor acetylhydrolase (422 aa).

An N-terminal signal peptide occupies residues 1–21 (MASLWVRARRVFMKSRASGFS). S266 serves as the catalytic Nucleophile. The active-site Charge relay system is D289. Residue N331 is glycosylated (N-linked (GlcNAc...) asparagine). H345 functions as the Charge relay system in the catalytic mechanism.

Belongs to the AB hydrolase superfamily. Lipase family. Plasma.

The protein localises to the secreted. It localises to the extracellular space. It catalyses the reaction a 1-O-alkyl-2-acetyl-sn-glycero-3-phosphocholine + H2O = a 1-O-alkyl-sn-glycero-3-phosphocholine + acetate + H(+). In terms of biological role, modulates the action of platelet-activating factor (PAF) by hydrolyzing the sn-2 ester bond to yield the biologically inactive lyso-PAF. Has a specificity for substrates with a short residue at the sn-2 position. It is inactive against long-chain phospholipids. This is Platelet-activating factor acetylhydrolase (PLA2G7) from Gallus gallus (Chicken).